Consider the following 372-residue polypeptide: Chorismate synthase (372 aa).

Arginine 48 serves as a coordination point for NADP(+). Residues 131-133 (RSS), 243-244 (NA), glycine 288, 303-307 (KPTSS), and arginine 329 each bind FMN.

It belongs to the chorismate synthase family. Homotetramer. FMNH2 is required as a cofactor.

It carries out the reaction 5-O-(1-carboxyvinyl)-3-phosphoshikimate = chorismate + phosphate. It participates in metabolic intermediate biosynthesis; chorismate biosynthesis; chorismate from D-erythrose 4-phosphate and phosphoenolpyruvate: step 7/7. Functionally, catalyzes the anti-1,4-elimination of the C-3 phosphate and the C-6 proR hydrogen from 5-enolpyruvylshikimate-3-phosphate (EPSP) to yield chorismate, which is the branch point compound that serves as the starting substrate for the three terminal pathways of aromatic amino acid biosynthesis. This reaction introduces a second double bond into the aromatic ring system. The polypeptide is Chorismate synthase (Caulobacter vibrioides (strain ATCC 19089 / CIP 103742 / CB 15) (Caulobacter crescentus)).